Reading from the N-terminus, the 404-residue chain is CCA-adding enzyme (404 aa).

The ATP site is built by glycine 27 and arginine 30. CTP-binding residues include glycine 27 and arginine 30. Mg(2+) contacts are provided by aspartate 40 and aspartate 42. Residues arginine 111, aspartate 154, arginine 157, arginine 160, and arginine 163 each coordinate ATP. Positions 111, 154, 157, 160, and 163 each coordinate CTP.

Belongs to the tRNA nucleotidyltransferase/poly(A) polymerase family. Bacterial CCA-adding enzyme type 3 subfamily. In terms of assembly, homodimer. Mg(2+) is required as a cofactor.

The enzyme catalyses a tRNA precursor + 2 CTP + ATP = a tRNA with a 3' CCA end + 3 diphosphate. It carries out the reaction a tRNA with a 3' CCA end + 2 CTP + ATP = a tRNA with a 3' CCACCA end + 3 diphosphate. Its function is as follows. Catalyzes the addition and repair of the essential 3'-terminal CCA sequence in tRNAs without using a nucleic acid template. Adds these three nucleotides in the order of C, C, and A to the tRNA nucleotide-73, using CTP and ATP as substrates and producing inorganic pyrophosphate. tRNA 3'-terminal CCA addition is required both for tRNA processing and repair. Also involved in tRNA surveillance by mediating tandem CCA addition to generate a CCACCA at the 3' terminus of unstable tRNAs. While stable tRNAs receive only 3'-terminal CCA, unstable tRNAs are marked with CCACCA and rapidly degraded. In Geobacillus thermodenitrificans (strain NG80-2), this protein is CCA-adding enzyme.